The sequence spans 218 residues: ATP phosphoribosyltransferase (218 aa).

It belongs to the ATP phosphoribosyltransferase family. Short subfamily. As to quaternary structure, heteromultimer composed of HisG and HisZ subunits.

The protein resides in the cytoplasm. It catalyses the reaction 1-(5-phospho-beta-D-ribosyl)-ATP + diphosphate = 5-phospho-alpha-D-ribose 1-diphosphate + ATP. It participates in amino-acid biosynthesis; L-histidine biosynthesis; L-histidine from 5-phospho-alpha-D-ribose 1-diphosphate: step 1/9. Functionally, catalyzes the condensation of ATP and 5-phosphoribose 1-diphosphate to form N'-(5'-phosphoribosyl)-ATP (PR-ATP). Has a crucial role in the pathway because the rate of histidine biosynthesis seems to be controlled primarily by regulation of HisG enzymatic activity. The protein is ATP phosphoribosyltransferase of Acaryochloris marina (strain MBIC 11017).